Here is a 141-residue protein sequence, read N- to C-terminus: Nucleoside diphosphate kinase (141 aa).

ATP is bound by residues Lys-11, Phe-59, Arg-87, Thr-93, Arg-104, and Asn-114. His-117 serves as the catalytic Pros-phosphohistidine intermediate.

Belongs to the NDK family. Homotetramer. It depends on Mg(2+) as a cofactor.

The protein localises to the cytoplasm. It carries out the reaction a 2'-deoxyribonucleoside 5'-diphosphate + ATP = a 2'-deoxyribonucleoside 5'-triphosphate + ADP. It catalyses the reaction a ribonucleoside 5'-diphosphate + ATP = a ribonucleoside 5'-triphosphate + ADP. Functionally, major role in the synthesis of nucleoside triphosphates other than ATP. The ATP gamma phosphate is transferred to the NDP beta phosphate via a ping-pong mechanism, using a phosphorylated active-site intermediate. The polypeptide is Nucleoside diphosphate kinase (Cupriavidus pinatubonensis (strain JMP 134 / LMG 1197) (Cupriavidus necator (strain JMP 134))).